The following is a 283-amino-acid chain: Acetylglutamate kinase (283 aa).

Substrate is bound by residues 64-65, arginine 86, and asparagine 178; that span reads GG.

It belongs to the acetylglutamate kinase family. ArgB subfamily.

It localises to the cytoplasm. It carries out the reaction N-acetyl-L-glutamate + ATP = N-acetyl-L-glutamyl 5-phosphate + ADP. It participates in amino-acid biosynthesis; L-arginine biosynthesis; N(2)-acetyl-L-ornithine from L-glutamate: step 2/4. In terms of biological role, catalyzes the ATP-dependent phosphorylation of N-acetyl-L-glutamate. The chain is Acetylglutamate kinase from Lactococcus lactis subsp. cremoris (strain SK11).